A 581-amino-acid polypeptide reads, in one-letter code: MLDLFGYKRRKTSVAQIGDTPLGGDFPIRIQSMANVSTMDTQASVDQAARIIDAGADYVRFTAQGVREAVNLQHIHAGLCRLGYHIPLVADIHFSPKAAEEALLHVEKVRINPGNFVEMKSGGNLTEEEAFDLGHKAVRERFGSFVEDAKRLGRAIRIGVNHGSLSERMLTRYGDTAEGMVQSCMEYLDVCHEHEFDDVVISMKASNTLVMTAAVRLLVERMDAADMHYPLHIGVTEAGDGEDGRIKSAVGIGSLLADGIGDTIRVSLSEDPEHEIPVARKLLAYIEKRNGHPSVAVPQPDRYDRDKLRRQETYAVGDFIGSKHIPIVISDRRQGDDHFDTELLPDIVLGADGRYYREDMLLENIVFRSIRQDDLTDDCLQTIEAISDTVIILESVGINPVAEWRAMLHRLELAGCRCPVILHRRYDCTDLEDLQLQASADMGAILLEGRGNGLMITADKLPSVAVNHLAFGILQATRLRMSRTEYISCPSCGRTLYNLQETVARIKAATAHLKELKIGIMGCIVNGPGEMADADYGYVGAGPGRIDLYKQKICVRRGIPQEQAVQQLIELIKENGDWKER.

[4Fe-4S] cluster-binding residues include C489, C492, C523, and E530.

Belongs to the IspG family. Requires [4Fe-4S] cluster as cofactor.

It carries out the reaction (2E)-4-hydroxy-3-methylbut-2-enyl diphosphate + oxidized [flavodoxin] + H2O + 2 H(+) = 2-C-methyl-D-erythritol 2,4-cyclic diphosphate + reduced [flavodoxin]. Its pathway is isoprenoid biosynthesis; isopentenyl diphosphate biosynthesis via DXP pathway; isopentenyl diphosphate from 1-deoxy-D-xylulose 5-phosphate: step 5/6. Functionally, converts 2C-methyl-D-erythritol 2,4-cyclodiphosphate (ME-2,4cPP) into 1-hydroxy-2-methyl-2-(E)-butenyl 4-diphosphate. The chain is 4-hydroxy-3-methylbut-2-en-1-yl diphosphate synthase (flavodoxin) from Porphyromonas gingivalis (strain ATCC BAA-308 / W83).